The sequence spans 313 residues: Probable pyridoxal 5'-phosphate synthase subunit PDX1.2 (313 aa).

D-ribose 5-phosphate is bound at residue Asp42. Catalysis depends on Lys99, which acts as the Schiff-base intermediate with D-ribose 5-phosphate. Gly171 lines the D-ribose 5-phosphate pocket. Arg183 lines the D-glyceraldehyde 3-phosphate pocket. Residues Gly232 and 253–254 (GS) each bind D-ribose 5-phosphate.

The protein belongs to the PdxS/SNZ family.

The catalysed reaction is aldehydo-D-ribose 5-phosphate + D-glyceraldehyde 3-phosphate + L-glutamine = pyridoxal 5'-phosphate + L-glutamate + phosphate + 3 H2O + H(+). Its pathway is cofactor biosynthesis; pyridoxal 5'-phosphate biosynthesis. Its function is as follows. Catalyzes the formation of pyridoxal 5'-phosphate from ribose 5-phosphate (RBP), glyceraldehyde 3-phosphate (G3P) and ammonia. The ammonia is provided by PDX2. Can also use ribulose 5-phosphate and dihydroxyacetone phosphate as substrates, resulting from enzyme-catalyzed isomerization of RBP and G3P, respectively. Also plays an indirect role in resistance to singlet oxygen-generating photosensitizers. The protein is Probable pyridoxal 5'-phosphate synthase subunit PDX1.2 (PDX12) of Oryza sativa subsp. japonica (Rice).